Consider the following 515-residue polypeptide: 1-pyrroline-5-carboxylate dehydrogenase (515 aa).

Catalysis depends on residues E286 and C320.

This sequence belongs to the aldehyde dehydrogenase family. RocA subfamily.

It catalyses the reaction L-glutamate 5-semialdehyde + NAD(+) + H2O = L-glutamate + NADH + 2 H(+). It functions in the pathway amino-acid degradation; L-proline degradation into L-glutamate; L-glutamate from L-proline: step 2/2. This is 1-pyrroline-5-carboxylate dehydrogenase from Bacillus cereus (strain B4264).